The sequence spans 147 residues: Leghemoglobin-1 (147 aa).

The Globin domain occupies 2 to 147; it reads SFTDKQEALV…LATAIKKAMS (146 aa). Nitrated tyrosine is present on residues Tyr25 and Tyr30. Ser45 contacts heme b. Residue Ser45 is modified to Phosphoserine. An O2-binding site is contributed by His62. Residues Lys65, His94, and Lys97 each contribute to the heme b site. Residue Tyr135 is modified to Nitrated tyrosine.

Belongs to the plant globin family. As to quaternary structure, monomer. In terms of processing, nitrated in effective nodules and particularly in hypoxic conditions; this mechanism may play a protective role in the symbiosis by buffering toxic peroxynitrite NO(2)(-). Nitration level decrease during nodule senescence. Post-translationally, phosphorylation at Ser-45 disrupts the molecular environment of its porphyrin ring oxygen binding pocket, thus leading to a reduced oxygen consumption and to the delivery of oxygen O(2) to symbiosomes. Root nodules.

It localises to the cytoplasm. The protein localises to the cytosol. The protein resides in the nucleus. In terms of biological role, leghemoglobin that reversibly binds oxygen O(2) through a pentacoordinated heme iron. In root nodules, facilitates the diffusion of oxygen to the bacteroids while preventing the bacterial nitrogenase from being inactivated by buffering dioxygen, nitric oxide and carbon monoxide, and promoting the formation of reactive oxygen species (ROS, e.g. H(2)O(2)). This role is essential for symbiotic nitrogen fixation (SNF). This is Leghemoglobin-1 from Medicago sativa (Alfalfa).